Here is a 51-residue protein sequence, read N- to C-terminus: Perinerin (51 aa).

Its function is as follows. Antibacterial activity against both Gram-negative and Gram-positive bacteria. Shows marked activity against P.aeruginosa, B.megaterium, A.viridans, moderate activity against E.coli K-12, S.aureus and M.luteus, and minor activity against P.vulgaris. Antifungal activity against P.heliothis. This is Perinerin from Perinereis aibuhitensis (Korean lugworm).